The sequence spans 258 residues: tRNA pseudouridine synthase A (258 aa).

Asp-53 (nucleophile) is an active-site residue. Tyr-111 lines the substrate pocket.

The protein belongs to the tRNA pseudouridine synthase TruA family. In terms of assembly, homodimer.

The enzyme catalyses uridine(38/39/40) in tRNA = pseudouridine(38/39/40) in tRNA. Its function is as follows. Formation of pseudouridine at positions 38, 39 and 40 in the anticodon stem and loop of transfer RNAs. This is tRNA pseudouridine synthase A from Streptococcus agalactiae serotype V (strain ATCC BAA-611 / 2603 V/R).